The following is a 491-amino-acid chain: Maintenance of mitochondrial morphology protein 1 (491 aa).

Residues 1-22 are Lumenal-facing; sequence MTFQQNEPSAVPAQSSLSFTQG. The chain crosses the membrane as a helical span at residues 23–43; sequence FLLGQLSVVLLIGAFIKFFIF. Residues 44 to 491 are Cytoplasmic-facing; the sequence is GEAPPPPSRG…GTLPGGAAAN (448 aa). Disordered stretches follow at residues 50-95, 275-325, and 392-491; these read PSRG…PVPS, PPLH…SPKS, and RTGV…AAAN. Basic residues predominate over residues 54 to 64; it reads LSHRASTHRRS. Polar residues-rich tracts occupy residues 65 to 78 and 85 to 95; these read NSIY…GTSR and STSNVLRPVPS. An SMP-LTD domain is found at 131–384; it reads QPESLDWFNV…EPRVQVVGLP (254 aa). The segment covering 275–287 has biased composition (pro residues); it reads PPLHTPSPSPSPP. 2 stretches are compositionally biased toward polar residues: residues 300–315 and 403–412; these read TNGS…NAQE and TGSNAASRSA. Over residues 422–434 the composition is skewed to basic and acidic residues; sequence RADDIGREPDGLR.

This sequence belongs to the MMM1 family. Homodimer. Component of the ER-mitochondria encounter structure (ERMES) or MDM complex, composed of mmm1, mdm10, mdm12 and mdm34. A mmm1 homodimer associates with one molecule of mdm12 on each side in a pairwise head-to-tail manner, and the SMP-LTD domains of mmm1 and mdm12 generate a continuous hydrophobic tunnel for phospholipid trafficking.

Its subcellular location is the endoplasmic reticulum membrane. Functionally, component of the ERMES/MDM complex, which serves as a molecular tether to connect the endoplasmic reticulum (ER) and mitochondria. Components of this complex are involved in the control of mitochondrial shape and protein biogenesis, and function in nonvesicular lipid trafficking between the ER and mitochondria. The mdm12-mmm1 subcomplex functions in the major beta-barrel assembly pathway that is responsible for biogenesis of all outer membrane beta-barrel proteins, and acts in a late step after the SAM complex. The mdm10-mdm12-mmm1 subcomplex further acts in the TOM40-specific pathway after the action of the mdm12-mmm1 complex. Essential for establishing and maintaining the structure of mitochondria and maintenance of mtDNA nucleoids. The chain is Maintenance of mitochondrial morphology protein 1 from Aspergillus flavus (strain ATCC 200026 / FGSC A1120 / IAM 13836 / NRRL 3357 / JCM 12722 / SRRC 167).